We begin with the raw amino-acid sequence, 628 residues long: (-)-beta-pinene synthase 1, chloroplastic (628 aa).

Residues 1–51 (MDLISVLPSASKSCVCLHKPLSSSTHKLKPFCRTIRILGMPRPRKSVLMVS) constitute a chloroplast transit peptide. Mg(2+) contacts are provided by aspartate 379, aspartate 383, and aspartate 531. The DDXXD motif motif lies at 379–383 (DDMYD).

This sequence belongs to the terpene synthase family. Tpsd subfamily. Requires Mg(2+) as cofactor. The cofactor is Mn(2+).

It localises to the plastid. The protein localises to the chloroplast. The catalysed reaction is (2E)-geranyl diphosphate = (1S,5S)-beta-pinene + diphosphate. The enzyme catalyses (2E)-geranyl diphosphate = (1S,5S)-alpha-pinene + diphosphate. It functions in the pathway terpene metabolism; oleoresin biosynthesis. The protein operates within secondary metabolite biosynthesis; terpenoid biosynthesis. Monoterpene synthase (TPS) involved in the biosynthesis of monoterpene natural products included in conifer oleoresin secretions and volatile emissions; these compounds contribute to biotic and abiotic stress defense against herbivores and pathogens. Catalyzes the conversion of (2E)-geranyl diphosphate (GPP) to (-)-beta-pinene and, to a lower extent, to (-)-alpha-pinene. The chain is (-)-beta-pinene synthase 1, chloroplastic from Pinus banksiana (Jack pine).